The primary structure comprises 405 residues: uncharacterized protein (405 aa).

At 1–18 (MPEPVAEPALNGLRLNLR) the chain is on the cytoplasmic side. A helical membrane pass occupies residues 19-39 (IVSIVMFNFASYLTIGLPLAV). Residues 40 to 46 (LPGYVHD) are Periplasmic-facing. A helical transmembrane segment spans residues 47–67 (VMGFSAFWAGLVISLQYFATL). The Cytoplasmic segment spans residues 68–84 (LSRPHAGRYADSLGPKK). A helical membrane pass occupies residues 85–105 (IVVFGLCGCFLSGLGYLTAGL). A topological domain (periplasmic) is located at residue T106. Residues 107-127 (ASLPVISLLLLCLGRVILGIG) form a helical membrane-spanning segment. At 128–155 (QSFAGTGSTLWGVGVVGSLHIGRVISWN) the chain is on the cytoplasmic side. A helical transmembrane segment spans residues 156–176 (GIVTYGAMAMGAPLGVVFYHW). A topological domain (periplasmic) is located at residue G177. The chain crosses the membrane as a helical span at residues 178–198 (GLQALALIIMGVALVAILLAI). Residues 199–223 (PRPTVKASKGKPLPFRAVLGRVWLY) lie on the Cytoplasmic side of the membrane. A helical membrane pass occupies residues 224–244 (GMALALASAGFGVIATFITLF). Over 245–251 (YDAKGWD) the chain is Periplasmic. Residues 252–272 (GAAFALTLFSCAFVGTRLLFP) traverse the membrane as a helical segment. Topologically, residues 273–282 (NGINRIGGLN) are cytoplasmic. A helical membrane pass occupies residues 283 to 303 (VAMICFSVEIIGLLLVGVATM). At 304–308 (PWMAK) the chain is on the periplasmic side. Residues 309–329 (IGVLLAGAGFSLVFPALGVVA) traverse the membrane as a helical segment. The Cytoplasmic portion of the chain corresponds to 330-343 (VKAVPQQNQGAALA). A helical membrane pass occupies residues 344 to 364 (TYTVFMDLSLGVTGPLAGLVM). S365 is a topological domain (periplasmic). A helical membrane pass occupies residues 366-386 (WAGVPVIYLAAAGLVAIALLL). The Cytoplasmic portion of the chain corresponds to 387-405 (TWRLKKRPPEHVPEAASSS).

The protein belongs to the major facilitator superfamily. YhhS family.

It localises to the cell inner membrane. Its function is as follows. Confers high-level resistance to glyphosate when overexpressed. Overexpression has no effect on intracellular arabinose concentrations. This is an uncharacterized protein from Escherichia coli (strain K12).